The sequence spans 61 residues: Bacteriocin leucocin-B (61 aa).

Residues Met-1–Gly-24 constitute a propeptide that is removed on maturation. Cys-33 and Cys-38 are oxidised to a cystine.

It belongs to the bacteriocin class IIA/YGNGV family.

It is found in the secreted. In terms of biological role, active against L.monocytogenes and several lactic acid bacteria. The protein is Bacteriocin leucocin-B of Leuconostoc carnosum.